The following is a 105-amino-acid chain: UPF0148 protein PYRAB12700 (105 aa).

It belongs to the UPF0148 family.

The protein is UPF0148 protein PYRAB12700 of Pyrococcus abyssi (strain GE5 / Orsay).